The chain runs to 452 residues: MGFNIAMLCDFFYPQLGGVEFHIYHLSQKLIDLGHSVVIITHAYKDRVGVRHLTNGLKVYHVPFFVIFRETTFPTVFSTFPIIRNILLREQIQIVHSHGSASTFAHEGILHANTMGLRTVFTDHSLYGFNNLTSIWVNKLLTFTLTNIDRVICVSNTCKENMIVRTELSPDIISVIPNAVVSEDFKPRDPTGGTKRKQSRDKIVIVVIGRLFPNKGSDLLTRIIPKVCSSHEDVEFIVAGDGPKFIDFQQMIESHRLQKRVQLLGSVPHEKVRDVLCQGDIYLHASLTEAFGTILVEAASCNLLIVTTQVGGIPEVLPNEMTVYAEQTSVSDLVQATNKAINIIRSKALDTSSFHDSVSKMYDWMDVAKRTVEIYTNISSTSSADDKDWMKMVANLYKRDGIWAKHLYLLCGIVEYMLFFLLEWLYPRDEIDLAPKWPKKTVSNETKEARET.

The chain crosses the membrane as a helical span at residues 407 to 427 (LYLLCGIVEYMLFFLLEWLYP).

It belongs to the glycosyltransferase group 1 family. As to quaternary structure, component of the phosphatidylinositol N-acetylglucosaminyltransferase complex composed of at least GPI1, GPI2, GPI3, GPI15, GPI19 and ERI1.

The protein localises to the endoplasmic reticulum membrane. The enzyme catalyses a 1,2-diacyl-sn-glycero-3-phospho-(1D-myo-inositol) + UDP-N-acetyl-alpha-D-glucosamine = a 6-(N-acetyl-alpha-D-glucosaminyl)-1-(1,2-diacyl-sn-glycero-3-phospho)-1D-myo-inositol + UDP + H(+). It participates in glycolipid biosynthesis; glycosylphosphatidylinositol-anchor biosynthesis. With respect to regulation, inhibited by Ras, probably via the interaction between RAS2 and ERI1. Catalytic subunit in the complex catalyzing the transfer of N-acetylglucosamine from UDP-N-acetylglucosamine to phosphatidylinositol, the first step of GPI biosynthesis. This Saccharomyces cerevisiae (strain RM11-1a) (Baker's yeast) protein is Phosphatidylinositol N-acetylglucosaminyltransferase GPI3 subunit (SPT14).